A 364-amino-acid polypeptide reads, in one-letter code: Lipoyl synthase, chloroplastic (364 aa).

Residues 1 to 70 (MEQTLFNPSI…PNVKKPEWLR (70 aa)) constitute a chloroplast transit peptide. Positions 32 to 52 (STNSPSSNTKTTTVTVPSKKT) are enriched in low complexity. The interval 32-64 (STNSPSSNTKTTTVTVPSKKTMGPYTGRDPNVK) is disordered. C95, C100, C106, C126, C130, C133, and S341 together coordinate [4Fe-4S] cluster. Positions 109-330 (GGGDGIATAT…KEYGESIGFR (222 aa)) constitute a Radical SAM core domain.

This sequence belongs to the radical SAM superfamily. Lipoyl synthase family. It depends on [4Fe-4S] cluster as a cofactor.

The protein resides in the plastid. It is found in the chloroplast. It carries out the reaction [[Fe-S] cluster scaffold protein carrying a second [4Fe-4S](2+) cluster] + N(6)-octanoyl-L-lysyl-[protein] + 2 oxidized [2Fe-2S]-[ferredoxin] + 2 S-adenosyl-L-methionine + 4 H(+) = [[Fe-S] cluster scaffold protein] + N(6)-[(R)-dihydrolipoyl]-L-lysyl-[protein] + 4 Fe(3+) + 2 hydrogen sulfide + 2 5'-deoxyadenosine + 2 L-methionine + 2 reduced [2Fe-2S]-[ferredoxin]. The protein operates within protein modification; protein lipoylation via endogenous pathway; protein N(6)-(lipoyl)lysine from octanoyl-[acyl-carrier-protein]: step 2/2. Functionally, catalyzes the radical-mediated insertion of two sulfur atoms into the C-6 and C-8 positions of the octanoyl moiety bound to the lipoyl domains of lipoate-dependent enzymes, thereby converting the octanoylated domains into lipoylated derivatives. The polypeptide is Lipoyl synthase, chloroplastic (Ricinus communis (Castor bean)).